The primary structure comprises 94 residues: Co-chaperonin GroES (94 aa).

It belongs to the GroES chaperonin family. Heptamer of 7 subunits arranged in a ring. Interacts with the chaperonin GroEL.

It is found in the cytoplasm. Together with the chaperonin GroEL, plays an essential role in assisting protein folding. The GroEL-GroES system forms a nano-cage that allows encapsulation of the non-native substrate proteins and provides a physical environment optimized to promote and accelerate protein folding. GroES binds to the apical surface of the GroEL ring, thereby capping the opening of the GroEL channel. This chain is Co-chaperonin GroES, found in Geobacillus stearothermophilus (Bacillus stearothermophilus).